The chain runs to 554 residues: Potassium-transporting ATPase potassium-binding subunit (554 aa).

The next 10 helical transmembrane spans lie at 1 to 21 (MSPV…LALA), 60 to 80 (PAYL…LYVL), 131 to 151 (GLAV…VALV), 174 to 194 (VRVL…CGAI), 246 to 266 (PGPF…FALT), 279 to 299 (GYAI…LMMW), 375 to 395 (GLYG…LMVG), 412 to 432 (FAAC…AAAM), 481 to 501 (IGIV…ALAG), and 525 to 545 (GLLV…ALAL).

It belongs to the KdpA family. In terms of assembly, the system is composed of three essential subunits: KdpA, KdpB and KdpC.

It is found in the cell membrane. In terms of biological role, part of the high-affinity ATP-driven potassium transport (or Kdp) system, which catalyzes the hydrolysis of ATP coupled with the electrogenic transport of potassium into the cytoplasm. This subunit binds the extracellular potassium ions and delivers the ions to the membrane domain of KdpB through an intramembrane tunnel. In Streptomyces avermitilis (strain ATCC 31267 / DSM 46492 / JCM 5070 / NBRC 14893 / NCIMB 12804 / NRRL 8165 / MA-4680), this protein is Potassium-transporting ATPase potassium-binding subunit.